Here is a 129-residue protein sequence, read N- to C-terminus: uncharacterized protein (129 aa).

It belongs to the asfivirus C129R family.

Its subcellular location is the virion. In terms of biological role, plays a role in the inhibition of type I interferon signaling pathway. Mechanistically, specifically interacts with 2',3'-cGAMP and cleaves it via its phosphodiesterase activity. In turn, prevents 2',3'-cGAMP interaction with host ER-resident STING1 leading to inhibition of downstream signaling pathway and type I interferon production. This is an uncharacterized protein from African swine fever virus (isolate Pig/Kenya/KEN-50/1950) (ASFV).